Reading from the N-terminus, the 94-residue chain is Co-chaperonin GroES (94 aa).

It belongs to the GroES chaperonin family. In terms of assembly, heptamer of 7 subunits arranged in a ring. Interacts with the chaperonin GroEL.

It is found in the cytoplasm. Its function is as follows. Together with the chaperonin GroEL, plays an essential role in assisting protein folding. The GroEL-GroES system forms a nano-cage that allows encapsulation of the non-native substrate proteins and provides a physical environment optimized to promote and accelerate protein folding. GroES binds to the apical surface of the GroEL ring, thereby capping the opening of the GroEL channel. In Staphylococcus aureus (strain Mu50 / ATCC 700699), this protein is Co-chaperonin GroES.